The primary structure comprises 456 residues: tRNA modification GTPase MnmE (456 aa).

The (6S)-5-formyl-5,6,7,8-tetrahydrofolate site is built by Arg21, Glu85, and Lys124. One can recognise a TrmE-type G domain in the interval 220–379 (QLRIVLYGEP…LLDEIQKKAA (160 aa)). Asn230 serves as a coordination point for K(+). Residues 230–235 (NTGKSS), 249–255 (SEIPGTT), and 274–277 (DTAG) each bind GTP. Ser234 is a binding site for Mg(2+). K(+) contacts are provided by Ser249, Ile251, and Thr254. Position 255 (Thr255) interacts with Mg(2+). Lys456 contacts (6S)-5-formyl-5,6,7,8-tetrahydrofolate.

This sequence belongs to the TRAFAC class TrmE-Era-EngA-EngB-Septin-like GTPase superfamily. TrmE GTPase family. Homodimer. Heterotetramer of two MnmE and two MnmG subunits. Requires K(+) as cofactor.

It localises to the cytoplasm. In terms of biological role, exhibits a very high intrinsic GTPase hydrolysis rate. Involved in the addition of a carboxymethylaminomethyl (cmnm) group at the wobble position (U34) of certain tRNAs, forming tRNA-cmnm(5)s(2)U34. This chain is tRNA modification GTPase MnmE, found in Leptospira borgpetersenii serovar Hardjo-bovis (strain JB197).